Consider the following 69-residue polypeptide: KHHLEYHLRNHFGSKPFKCEKCSYSCVNKSMLNSHLKSHSNVYQYRCANCTYATKYCHSLKLHLRKYSH.

3 C2H2-type zinc fingers span residues 1-11, 17-39, and 45-69; these read KHHLEYHLRNH, FKCE…LKSH, and YRCA…KYSH.

Belongs to the hunchback C2H2-type zinc-finger protein family.

The protein localises to the nucleus. In terms of biological role, gap class segmentation protein that controls development of head structures. The polypeptide is Protein hunchback (hb) (Apis mellifera (Honeybee)).